The primary structure comprises 317 residues: Melanocyte-stimulating hormone receptor (317 aa).

Residues 1-37 lie on the Extracellular side of the membrane; that stretch reads MPVLGSQRRLLGSLNCTPPATLPLTLAPNRTGPQCLE. Residue Asn29 is glycosylated (N-linked (GlcNAc...) asparagine). Residues 38-63 form a helical membrane-spanning segment; that stretch reads VSIPDGLFLSLGLVSLVENVLVVAAI. Over 64–72 the chain is Cytoplasmic; that stretch reads AKNRNLHSP. The chain crosses the membrane as a helical span at residues 73-93; that stretch reads MYYFICCLAMSDLLVSVSNVL. Over 94–118 the chain is Extracellular; it reads ETAVMLLLEAGVLATRAAVVQQLDN. The helical transmembrane segment at 119–140 threads the bilayer; the sequence is VIDVLICSSMVSSLCFLGAIAV. At 141-163 the chain is on the cytoplasmic side; that stretch reads DRYISIFYALRYHSVVTLPRAWR. Residues 164–183 traverse the membrane as a helical segment; that stretch reads IIAAIWVASILTSVLSITYY. Residues 184-191 lie on the Extracellular side of the membrane; it reads NHTVVLLC. A helical membrane pass occupies residues 192-211; the sequence is LVGFFIAMLALMAVLYVHML. The Cytoplasmic portion of the chain corresponds to 212–240; the sequence is ARACQHARGIARLQKRQRPIHQGFGLKGA. Residues 241-266 form a helical membrane-spanning segment; that stretch reads ATLTILLGVFFLCWGPFFLHLSLIVL. The Extracellular segment spans residues 267–279; the sequence is CPQHPTCGCIFKN. A helical transmembrane segment spans residues 280 to 300; that stretch reads FNLFLALIICNAIVDPLIYAF. Topologically, residues 301–317 are cytoplasmic; it reads RSQELRKTLQEVLQCSW. Cys315 is lipidated: S-palmitoyl cysteine.

It belongs to the G-protein coupled receptor 1 family. In terms of assembly, interacts with MGRN1, but does not undergo MGRN1-mediated ubiquitination; this interaction competes with GNAS-binding and thus inhibits agonist-induced cAMP production. Interacts with OPN3; the interaction results in a decrease in MC1R-mediated cAMP signaling and ultimately a decrease in melanin production in melanocytes.

The protein resides in the cell membrane. Functionally, receptor for MSH (alpha, beta and gamma) and ACTH. The activity of this receptor is mediated by G proteins which activate adenylate cyclase. Mediates melanogenesis, the production of eumelanin (black/brown) and phaeomelanin (red/yellow), via regulation of cAMP signaling in melanocytes. This chain is Melanocyte-stimulating hormone receptor (MC1R), found in Ovis aries (Sheep).